Consider the following 127-residue polypeptide: Protein B20 (127 aa).

A disordered region spans residues 86-127 (DRTGMNSESDSESDNISIKTEYENEYEFYDETQDQSTQHNDL). Residues 108-118 (ENEYEFYDETQ) show a composition bias toward acidic residues.

The polypeptide is Protein B20 (Homo sapiens (Human)).